Reading from the N-terminus, the 377-residue chain is 2-aminoethylphosphonate--pyruvate transaminase (377 aa).

The residue at position 194 (K194) is an N6-(pyridoxal phosphate)lysine.

It belongs to the class-V pyridoxal-phosphate-dependent aminotransferase family. PhnW subfamily. In terms of assembly, homodimer. Pyridoxal 5'-phosphate serves as cofactor.

The enzyme catalyses (2-aminoethyl)phosphonate + pyruvate = phosphonoacetaldehyde + L-alanine. In terms of biological role, involved in phosphonate degradation. The protein is 2-aminoethylphosphonate--pyruvate transaminase of Cupriavidus taiwanensis (strain DSM 17343 / BCRC 17206 / CCUG 44338 / CIP 107171 / LMG 19424 / R1) (Ralstonia taiwanensis (strain LMG 19424)).